We begin with the raw amino-acid sequence, 37 residues long: Large ribosomal subunit protein bL36 (37 aa).

The protein belongs to the bacterial ribosomal protein bL36 family.

This Mycoplasmoides gallisepticum (strain R(low / passage 15 / clone 2)) (Mycoplasma gallisepticum) protein is Large ribosomal subunit protein bL36 (rpmJ).